The following is a 411-amino-acid chain: Multifunctional CCA protein (411 aa).

Residues G8 and R11 each coordinate ATP. Residues G8 and R11 each contribute to the CTP site. The Mg(2+) site is built by E21 and D23. Residues R91, R137, and R140 each contribute to the ATP site. Residues R91, R137, and R140 each coordinate CTP. The 102-residue stretch at 228 to 329 folds into the HD domain; it reads TGVHALLALE…LKTLLALDGL (102 aa).

It belongs to the tRNA nucleotidyltransferase/poly(A) polymerase family. Bacterial CCA-adding enzyme type 1 subfamily. In terms of assembly, monomer. Can also form homodimers and oligomers. The cofactor is Mg(2+). Ni(2+) serves as cofactor.

It carries out the reaction a tRNA precursor + 2 CTP + ATP = a tRNA with a 3' CCA end + 3 diphosphate. The catalysed reaction is a tRNA with a 3' CCA end + 2 CTP + ATP = a tRNA with a 3' CCACCA end + 3 diphosphate. Functionally, catalyzes the addition and repair of the essential 3'-terminal CCA sequence in tRNAs without using a nucleic acid template. Adds these three nucleotides in the order of C, C, and A to the tRNA nucleotide-73, using CTP and ATP as substrates and producing inorganic pyrophosphate. tRNA 3'-terminal CCA addition is required both for tRNA processing and repair. Also involved in tRNA surveillance by mediating tandem CCA addition to generate a CCACCA at the 3' terminus of unstable tRNAs. While stable tRNAs receive only 3'-terminal CCA, unstable tRNAs are marked with CCACCA and rapidly degraded. The chain is Multifunctional CCA protein from Teredinibacter turnerae (strain ATCC 39867 / T7901).